Here is a 347-residue protein sequence, read N- to C-terminus: Phosphate acyltransferase (347 aa).

This sequence belongs to the PlsX family. In terms of assembly, homodimer. Probably interacts with PlsY.

Its subcellular location is the cytoplasm. It catalyses the reaction a fatty acyl-[ACP] + phosphate = an acyl phosphate + holo-[ACP]. Its pathway is lipid metabolism; phospholipid metabolism. In terms of biological role, catalyzes the reversible formation of acyl-phosphate (acyl-PO(4)) from acyl-[acyl-carrier-protein] (acyl-ACP). This enzyme utilizes acyl-ACP as fatty acyl donor, but not acyl-CoA. This chain is Phosphate acyltransferase, found in Rhizobium meliloti (strain 1021) (Ensifer meliloti).